The following is a 429-amino-acid chain: Serine--tRNA ligase (429 aa).

235-237 (TAE) is an L-serine binding site. 266–268 (RSE) is a binding site for ATP. Glu289 contributes to the L-serine binding site. Residue 353–356 (EISS) coordinates ATP. L-serine is bound at residue Ser389.

Belongs to the class-II aminoacyl-tRNA synthetase family. Type-1 seryl-tRNA synthetase subfamily. As to quaternary structure, homodimer. The tRNA molecule binds across the dimer.

The protein resides in the cytoplasm. The enzyme catalyses tRNA(Ser) + L-serine + ATP = L-seryl-tRNA(Ser) + AMP + diphosphate + H(+). It carries out the reaction tRNA(Sec) + L-serine + ATP = L-seryl-tRNA(Sec) + AMP + diphosphate + H(+). The protein operates within aminoacyl-tRNA biosynthesis; selenocysteinyl-tRNA(Sec) biosynthesis; L-seryl-tRNA(Sec) from L-serine and tRNA(Sec): step 1/1. Catalyzes the attachment of serine to tRNA(Ser). Is also able to aminoacylate tRNA(Sec) with serine, to form the misacylated tRNA L-seryl-tRNA(Sec), which will be further converted into selenocysteinyl-tRNA(Sec). The protein is Serine--tRNA ligase of Actinobacillus succinogenes (strain ATCC 55618 / DSM 22257 / CCUG 43843 / 130Z).